A 386-amino-acid polypeptide reads, in one-letter code: Phosphoglycerate kinase (386 aa).

Residues 21 to 23, R36, 59 to 62, R112, and R145 contribute to the substrate site; these read DLN and HLGR. ATP contacts are provided by residues K196, E313, and 339-342; that span reads GGDT.

It belongs to the phosphoglycerate kinase family. Monomer.

Its subcellular location is the cytoplasm. The enzyme catalyses (2R)-3-phosphoglycerate + ATP = (2R)-3-phospho-glyceroyl phosphate + ADP. The protein operates within carbohydrate degradation; glycolysis; pyruvate from D-glyceraldehyde 3-phosphate: step 2/5. The protein is Phosphoglycerate kinase (pgk) of Haemophilus influenzae (strain ATCC 51907 / DSM 11121 / KW20 / Rd).